A 249-amino-acid chain; its full sequence is Probable transcriptional regulatory protein Tfu_2096 (249 aa).

This sequence belongs to the TACO1 family.

It localises to the cytoplasm. In Thermobifida fusca (strain YX), this protein is Probable transcriptional regulatory protein Tfu_2096.